Reading from the N-terminus, the 397-residue chain is Major outer membrane porin, serovar H (397 aa).

The signal sequence occupies residues 1-22 (MKKLLKSVLVFAALSSASSLQA).

Belongs to the chlamydial porin (CP) (TC 1.B.2) family. In terms of assembly, part of a disulfide cross-linked outer membrane complex (COMC) composed of the major outer membrane porin (MOMP), the small cysteine-rich protein (OmcA) and the large cysteine-rich periplasmic protein (OmcB).

The protein resides in the cell outer membrane. Its function is as follows. In elementary bodies (EBs, the infectious stage, which is able to survive outside the host cell) provides the structural integrity of the outer envelope through disulfide cross-links with the small cysteine-rich protein and the large cysteine-rich periplasmic protein. It has been described in publications as the Sarkosyl-insoluble COMC (Chlamydia outer membrane complex), and serves as the functional equivalent of peptidoglycan. In terms of biological role, permits diffusion of specific solutes through the outer membrane. The sequence is that of Major outer membrane porin, serovar H (ompA) from Chlamydia trachomatis.